The chain runs to 448 residues: MSASAVNVTPGRNVVVVGTQWGDEGKGKIVDWLTDHAQGVVRFQGGHNAGHTLIIGGKKTILRLIPSGIMREGVACYIGNGVVLSPEALFKEIGELEEAGLSVRERLFISEATTLILPYHIAIDQAREARKGAGKIGTTGRGIGPAYEDKVGRRALRVQDLFDARTFADRLRENLDFHNFVLTQYLGGAAVDFQATLDTMLGYADRLRPMVADVSRRLYEENHAGRNLLFEGAQGTLLDIDHGTYPFVTSSNCVAGAAAAGAGVGPQKLNYILGITKAYCTRVGSGPFPSELYDADNPSRQDQIGITLANVGKEFGSVTGRPRRTGWLDAAALRRSIQINGVSGLCMTKLDVLDGLDEVKLCVGYKIDGEDADLLPRGAAEVARCEPVYETFGGWKESTVGINSWDALPANARAYLTRVQEVAGVPIDMVSTGPDRDETILLRHPFKV.

GTP is bound by residues G22–K28 and G50–T52. Residue D23 is the Proton acceptor of the active site. The Mg(2+) site is built by D23 and G50. IMP-binding positions include D23–K26, N48–H51, T139, R153, Q234, T249, and R321. H51 (proton donor) is an active-site residue. S317 to R323 is a binding site for substrate. Residues R323, K349–D351, and S431–G433 contribute to the GTP site.

It belongs to the adenylosuccinate synthetase family. As to quaternary structure, homodimer. Mg(2+) is required as a cofactor.

It is found in the cytoplasm. The catalysed reaction is IMP + L-aspartate + GTP = N(6)-(1,2-dicarboxyethyl)-AMP + GDP + phosphate + 2 H(+). The protein operates within purine metabolism; AMP biosynthesis via de novo pathway; AMP from IMP: step 1/2. Its function is as follows. Plays an important role in the de novo pathway of purine nucleotide biosynthesis. Catalyzes the first committed step in the biosynthesis of AMP from IMP. The polypeptide is Adenylosuccinate synthetase (Burkholderia thailandensis (strain ATCC 700388 / DSM 13276 / CCUG 48851 / CIP 106301 / E264)).